Consider the following 178-residue polypeptide: Ribosome maturation factor RimM (178 aa).

The PRC barrel domain occupies 94 to 174 (KNEFFWFDLI…RIDVINSFDI (81 aa)).

Belongs to the RimM family. Binds ribosomal protein uS19.

It localises to the cytoplasm. In terms of biological role, an accessory protein needed during the final step in the assembly of 30S ribosomal subunit, possibly for assembly of the head region. Essential for efficient processing of 16S rRNA. May be needed both before and after RbfA during the maturation of 16S rRNA. It has affinity for free ribosomal 30S subunits but not for 70S ribosomes. The polypeptide is Ribosome maturation factor RimM (Aliarcobacter butzleri (strain RM4018) (Arcobacter butzleri)).